An 804-amino-acid chain; its full sequence is Leucine--tRNA ligase (804 aa).

Residues proline 40–histidine 51 carry the 'HIGH' region motif. Positions lysine 576–serine 580 match the 'KMSKS' region motif. Lysine 579 contributes to the ATP binding site.

This sequence belongs to the class-I aminoacyl-tRNA synthetase family.

It is found in the cytoplasm. The catalysed reaction is tRNA(Leu) + L-leucine + ATP = L-leucyl-tRNA(Leu) + AMP + diphosphate. The polypeptide is Leucine--tRNA ligase (Bacillus pumilus (strain SAFR-032)).